The primary structure comprises 208 residues: FMN-dependent NADH:quinone oxidoreductase 1 (208 aa).

17–19 (SVS) contributes to the FMN binding site.

Belongs to the azoreductase type 1 family. As to quaternary structure, homodimer. It depends on FMN as a cofactor.

The catalysed reaction is 2 a quinone + NADH + H(+) = 2 a 1,4-benzosemiquinone + NAD(+). The enzyme catalyses N,N-dimethyl-1,4-phenylenediamine + anthranilate + 2 NAD(+) = 2-(4-dimethylaminophenyl)diazenylbenzoate + 2 NADH + 2 H(+). Functionally, quinone reductase that provides resistance to thiol-specific stress caused by electrophilic quinones. Also exhibits azoreductase activity. Catalyzes the reductive cleavage of the azo bond in aromatic azo compounds to the corresponding amines. In Listeria innocua serovar 6a (strain ATCC BAA-680 / CLIP 11262), this protein is FMN-dependent NADH:quinone oxidoreductase 1.